Consider the following 852-residue polypeptide: Protein SEY1 (852 aa).

Residues 1–738 (MNGHFAAIGN…KRSAIGGITQ (738 aa)) are Cytoplasmic-facing. Positions 47 to 294 (GFNYHLISVF…IPADGLSVYA (248 aa)) constitute a GB1/RHD3-type G domain. 57-64 (GSQSTGKS) is a GTP binding site. Residues 475–500 (QYKLFEKELDEVSARLRKEEMRRLAI) adopt a coiled-coil conformation. A helical transmembrane segment spans residues 739-759 (VPLYFYVILLILGWNEILMVL). Residues 760-762 (RNP) are Lumenal-facing. Residues 763–783 (FLILLILVMGGGTYIAYSLNL) form a helical membrane-spanning segment. The Cytoplasmic portion of the chain corresponds to 784–852 (LGPMMQMSNA…AQDISDDDDI (69 aa)).

This sequence belongs to the TRAFAC class dynamin-like GTPase superfamily. GB1/RHD3 GTPase family. RHD3 subfamily.

The protein resides in the endoplasmic reticulum membrane. Cooperates with the reticulon proteins and tubule-shaping DP1 family proteins to generate and maintain the structure of the tubular endoplasmic reticulum network. Has GTPase activity, which is required for its function in ER organization. This chain is Protein SEY1, found in Podospora anserina (strain S / ATCC MYA-4624 / DSM 980 / FGSC 10383) (Pleurage anserina).